The chain runs to 120 residues: Large ribosomal subunit protein uL14 (120 aa).

It belongs to the universal ribosomal protein uL14 family. Part of the 50S ribosomal subunit. Forms a cluster with proteins L3 and L19. In the 70S ribosome, L14 and L19 interact and together make contacts with the 16S rRNA in bridges B5 and B8.

Functionally, binds to 23S rRNA. Forms part of two intersubunit bridges in the 70S ribosome. This Karelsulcia muelleri (strain GWSS) (Sulcia muelleri) protein is Large ribosomal subunit protein uL14.